Here is a 645-residue protein sequence, read N- to C-terminus: DEAD-box ATP-dependent RNA helicase 46 (645 aa).

Disordered stretches follow at residues 1-22 and 44-137; these read MAATASAIRYAPEDPNLPKPWK and YERP…AGNE. Residues 15–49 form the WW domain; it reads PNLPKPWKGLVDSRTGYLYFWNPETNVTQYERPAS. Over residues 60 to 72 the composition is skewed to low complexity; it reads VSSSVQTNQQSSS. Positions 77 to 91 are enriched in basic and acidic residues; that stretch reads GKEDDKYGRGSDGPK. Residues 108-136 are compositionally biased toward low complexity; it reads SSNDAASGLGNASSGGSSARGPPSSAAGN. A Q motif motif is present at residues 161 to 189; that stretch reads MSFEATGLPNELLREVYSAGFSAPSPIQA. The 175-residue stretch at 192–366 folds into the Helicase ATP-binding domain; that stretch reads WPIAMQNRDI…ADLLVNPAQV (175 aa). 205 to 212 contacts ATP; that stretch reads AKTGSGKT. The DEAD box motif lies at 314 to 317; sequence DEAD. The Helicase C-terminal domain occupies 395–539; it reads RLEQILRSQE…KVPPQVREMA (145 aa). The interval 532-645 is disordered; it reads PPQVREMATR…FHEAMMMKNR (114 aa). Over residues 556-597 the composition is skewed to gly residues; that stretch reads SSGGGGGRGGYGDSGYGGRGESGYGSRGDSGYGGRGDSGGRG. Over residues 598–608 the composition is skewed to low complexity; it reads SWAPSRDSSGS. Basic and acidic residues predominate over residues 612–623; sequence GRERSRSPERFR. Over residues 624-634 the composition is skewed to low complexity; it reads GGPPSTSSPPR.

This sequence belongs to the DEAD box helicase family. DDX5/DBP2 subfamily.

The catalysed reaction is ATP + H2O = ADP + phosphate + H(+). This Arabidopsis thaliana (Mouse-ear cress) protein is DEAD-box ATP-dependent RNA helicase 46 (RH46).